Reading from the N-terminus, the 96-residue chain is Large ribosomal subunit protein uL23 (96 aa).

It belongs to the universal ribosomal protein uL23 family. In terms of assembly, part of the 50S ribosomal subunit. Contacts protein L29, and trigger factor when it is bound to the ribosome.

Functionally, one of the early assembly proteins it binds 23S rRNA. One of the proteins that surrounds the polypeptide exit tunnel on the outside of the ribosome. Forms the main docking site for trigger factor binding to the ribosome. The chain is Large ribosomal subunit protein uL23 from Syntrophus aciditrophicus (strain SB).